The following is a 248-amino-acid chain: ATP synthase subunit a (248 aa).

5 consecutive transmembrane segments (helical) span residues 31-51, 90-110, 129-149, 195-215, and 216-236; these read GQVL…VLLG, VPYV…GNLF, INTT…AGIS, VIAV…MILF, and LFTG…YIGE.

Belongs to the ATPase A chain family. As to quaternary structure, F-type ATPases have 2 components, CF(1) - the catalytic core - and CF(0) - the membrane proton channel. CF(1) has five subunits: alpha(3), beta(3), gamma(1), delta(1), epsilon(1). CF(0) has four main subunits: a, b, b' and c.

The protein resides in the cellular thylakoid membrane. Key component of the proton channel; it plays a direct role in the translocation of protons across the membrane. This Synechococcus sp. (strain JA-3-3Ab) (Cyanobacteria bacterium Yellowstone A-Prime) protein is ATP synthase subunit a.